The primary structure comprises 209 residues: Ribosomal RNA large subunit methyltransferase E (209 aa).

Residues Gly-63, Trp-65, Asp-83, Asp-99, and Asp-124 each coordinate S-adenosyl-L-methionine. Lys-164 (proton acceptor) is an active-site residue.

The protein belongs to the class I-like SAM-binding methyltransferase superfamily. RNA methyltransferase RlmE family.

It is found in the cytoplasm. The catalysed reaction is uridine(2552) in 23S rRNA + S-adenosyl-L-methionine = 2'-O-methyluridine(2552) in 23S rRNA + S-adenosyl-L-homocysteine + H(+). Functionally, specifically methylates the uridine in position 2552 of 23S rRNA at the 2'-O position of the ribose in the fully assembled 50S ribosomal subunit. This Shewanella amazonensis (strain ATCC BAA-1098 / SB2B) protein is Ribosomal RNA large subunit methyltransferase E.